The sequence spans 170 residues: Bifunctional protein PyrR (170 aa).

The PRPP-binding signature appears at 90-102 (LVLIDDVLMSGRT).

This sequence belongs to the purine/pyrimidine phosphoribosyltransferase family. PyrR subfamily.

It carries out the reaction UMP + diphosphate = 5-phospho-alpha-D-ribose 1-diphosphate + uracil. Regulates the transcription of the pyrimidine nucleotide (pyr) operon in response to exogenous pyrimidines. In terms of biological role, also displays a weak uracil phosphoribosyltransferase activity which is not physiologically significant. In Pseudomonas syringae pv. tomato (strain ATCC BAA-871 / DC3000), this protein is Bifunctional protein PyrR.